A 192-amino-acid chain; its full sequence is Ribosome maturation factor RimM (192 aa).

One can recognise a PRC barrel domain in the interval 97–172 (EDEYYLADLI…VVLADPPALV (76 aa)). The disordered stretch occupies residues 168 to 192 (PPALVGEPEGPESPAEDDDGERHYD).

It belongs to the RimM family. Binds ribosomal protein uS19.

It is found in the cytoplasm. In terms of biological role, an accessory protein needed during the final step in the assembly of 30S ribosomal subunit, possibly for assembly of the head region. Essential for efficient processing of 16S rRNA. May be needed both before and after RbfA during the maturation of 16S rRNA. It has affinity for free ribosomal 30S subunits but not for 70S ribosomes. The sequence is that of Ribosome maturation factor RimM from Caulobacter sp. (strain K31).